The following is a 493-amino-acid chain: Acetyl-coenzyme A carboxylase carboxyl transferase subunit beta (493 aa).

The region spanning 231–493 (LWVQCENCYG…FKLHAFFPLN (263 aa)) is the CoA carboxyltransferase N-terminal domain. Positions 235, 238, 254, and 257 each coordinate Zn(2+). A C4-type zinc finger spans residues 235-257 (CENCYGLNYKKFLKSKINLCEQC).

It belongs to the AccD/PCCB family. Acetyl-CoA carboxylase is a heterohexamer composed of biotin carboxyl carrier protein, biotin carboxylase and 2 subunits each of ACCase subunit alpha and ACCase plastid-coded subunit beta (accD). Zn(2+) serves as cofactor.

The protein resides in the plastid stroma. It catalyses the reaction N(6)-carboxybiotinyl-L-lysyl-[protein] + acetyl-CoA = N(6)-biotinyl-L-lysyl-[protein] + malonyl-CoA. Its pathway is lipid metabolism; malonyl-CoA biosynthesis; malonyl-CoA from acetyl-CoA: step 1/1. Component of the acetyl coenzyme A carboxylase (ACC) complex. Biotin carboxylase (BC) catalyzes the carboxylation of biotin on its carrier protein (BCCP) and then the CO(2) group is transferred by the transcarboxylase to acetyl-CoA to form malonyl-CoA. The chain is Acetyl-coenzyme A carboxylase carboxyl transferase subunit beta from Epifagus virginiana (Beechdrops).